The sequence spans 350 residues: Galactokinase (350 aa).

14–17 is a substrate binding site; sequence EHTD. ATP-binding positions include serine 46 and 96 to 102; that span reads GAGLSSS. Mg(2+)-binding residues include serine 102 and glutamate 134. Aspartate 146 (proton acceptor) is an active-site residue. Residue tyrosine 196 participates in substrate binding.

The protein belongs to the GHMP kinase family. GalK subfamily.

It is found in the cytoplasm. It catalyses the reaction alpha-D-galactose + ATP = alpha-D-galactose 1-phosphate + ADP + H(+). The protein operates within carbohydrate metabolism; galactose metabolism. Functionally, catalyzes the transfer of the gamma-phosphate of ATP to D-galactose to form alpha-D-galactose-1-phosphate (Gal-1-P). This chain is Galactokinase, found in Thermotoga neapolitana (strain ATCC 49049 / DSM 4359 / NBRC 107923 / NS-E).